We begin with the raw amino-acid sequence, 250 residues long: Dimethyl sulfide dehydrogenase assembly chaperone protein (250 aa).

Residues 231–250 form a disordered region; it reads SAEARSDSAPDAAAHQNLWG.

This sequence belongs to the type II DMSO reductase enzyme chaperone family.

The protein localises to the cytoplasm. May function as a system-specific chaperone protein essential for the assembly of an active dimethyl sulfide dehydrogenase DdhABC. In Rhodovulum sulfidophilum (Rhodobacter sulfidophilus), this protein is Dimethyl sulfide dehydrogenase assembly chaperone protein (ddhD).